The following is a 163-amino-acid chain: Putative 4-hydroxy-4-methyl-2-oxoglutarate aldolase (163 aa).

Substrate-binding positions include 76-79 and Arg-98; that span reads GDMI. Asp-99 provides a ligand contact to a divalent metal cation.

Belongs to the class II aldolase/RraA-like family. As to quaternary structure, homotrimer. A divalent metal cation serves as cofactor.

It catalyses the reaction 4-hydroxy-4-methyl-2-oxoglutarate = 2 pyruvate. The catalysed reaction is oxaloacetate + H(+) = pyruvate + CO2. In terms of biological role, catalyzes the aldol cleavage of 4-hydroxy-4-methyl-2-oxoglutarate (HMG) into 2 molecules of pyruvate. Also contains a secondary oxaloacetate (OAA) decarboxylase activity due to the common pyruvate enolate transition state formed following C-C bond cleavage in the retro-aldol and decarboxylation reactions. This chain is Putative 4-hydroxy-4-methyl-2-oxoglutarate aldolase, found in Pseudomonas fluorescens (strain SBW25).